The primary structure comprises 115 residues: NAD(P)H-quinone oxidoreductase subunit M (115 aa).

Belongs to the complex I NdhM subunit family. In terms of assembly, NDH-1 can be composed of about 15 different subunits; different subcomplexes with different compositions have been identified which probably have different functions.

It localises to the cellular thylakoid membrane. It catalyses the reaction a plastoquinone + NADH + (n+1) H(+)(in) = a plastoquinol + NAD(+) + n H(+)(out). The catalysed reaction is a plastoquinone + NADPH + (n+1) H(+)(in) = a plastoquinol + NADP(+) + n H(+)(out). NDH-1 shuttles electrons from an unknown electron donor, via FMN and iron-sulfur (Fe-S) centers, to quinones in the respiratory and/or the photosynthetic chain. The immediate electron acceptor for the enzyme in this species is believed to be plastoquinone. Couples the redox reaction to proton translocation, and thus conserves the redox energy in a proton gradient. Cyanobacterial NDH-1 also plays a role in inorganic carbon-concentration. The polypeptide is NAD(P)H-quinone oxidoreductase subunit M (Prochlorococcus marinus (strain AS9601)).